The following is a 168-amino-acid chain: Sperm acrosome-associated protein 9 (168 aa).

In terms of assembly, microtubule inner protein component of sperm flagellar doublet microtubules. Interacts with CABP1 and CALR. Interacts with INCA1. Interacts with microtubules. Expressed in sperm (at protein level). Expressed from almost all the cell types of testis, with abundant expression in round and elongated spermatids (at protein level). Predominantly expressed in tissues containing motile cilia.

The protein resides in the cytoplasm. It localises to the cytoplasmic vesicle. Its subcellular location is the secretory vesicle. The protein localises to the acrosome. It is found in the cytoskeleton. The protein resides in the cilium basal body. It localises to the flagellum axoneme. Its subcellular location is the cilium axoneme. The protein localises to the nucleus. Functionally, microtubule inner protein (MIP) part of the dynein-decorated doublet microtubules (DMTs) of multiciliated respiratory cells and the distal singlet microtubules of monoflagellated spermatozoa. Forms an extensive interaction network cross-linking the lumen of axonemal doublet microtubules. The protein is Sperm acrosome-associated protein 9 of Mus musculus (Mouse).